A 312-amino-acid chain; its full sequence is Ribosomal protein L11 methyltransferase (312 aa).

Positions 162, 183, 205, and 248 each coordinate S-adenosyl-L-methionine.

This sequence belongs to the methyltransferase superfamily. PrmA family.

The protein localises to the cytoplasm. It catalyses the reaction L-lysyl-[protein] + 3 S-adenosyl-L-methionine = N(6),N(6),N(6)-trimethyl-L-lysyl-[protein] + 3 S-adenosyl-L-homocysteine + 3 H(+). In terms of biological role, methylates ribosomal protein L11. This Geobacillus kaustophilus (strain HTA426) protein is Ribosomal protein L11 methyltransferase.